Here is a 335-residue protein sequence, read N- to C-terminus: Nucleoid-associated protein YejK (335 aa).

It belongs to the YejK family.

It is found in the cytoplasm. Its subcellular location is the nucleoid. The protein is Nucleoid-associated protein YejK of Salmonella enteritidis PT4 (strain P125109).